The primary structure comprises 128 residues: Con-Ins F1 (128 aa).

Residues 1-24 (MTTSSYFLLVTLGLLLYVCRSSFG) form the signal peptide. 4 cysteine pairs are disulfide-bonded: Cys29–Cys104, Cys41–Cys107, Cys53–Cys120, and Cys106–Cys111. Positions 59-89 (LQGGTGKKRGRASPLRKRRAFLSMLKARAKR) are cleaved as a propeptide — c peptide. A 4-carboxyglutamate; partial modification is found at Glu115. A Serine amide modification is found at Ser127.

The protein belongs to the insulin family. Heterodimer of A and B chains; disulfide-linked. As to expression, expressed by the venom gland.

The protein resides in the secreted. Functionally, this venom insulin facilitates prey capture by rapidly inducing hypoglycemic shock. Intraperitoneal injection of this peptide into zebrafish lowers blood glucose with the same potency than human insulin. In vivo, when applied to water, this peptide reduces overall locomotor activity of zebrafish larvae, observed as a significant decrease in the percentage of time spent swimming and movement frequency. In Conus floridulus (Cone snail), this protein is Con-Ins F1.